The chain runs to 87 residues: Cell division protein FtsL (87 aa).

At Met-1 to Arg-3 the chain is on the cytoplasmic side. Residues Leu-4 to Met-23 form a helical membrane-spanning segment. The Periplasmic portion of the chain corresponds to Arg-24–Pro-87.

It belongs to the FtsL family. Part of a complex composed of FtsB, FtsL and FtsQ.

It localises to the cell inner membrane. Its function is as follows. Essential cell division protein. May link together the upstream cell division proteins, which are predominantly cytoplasmic, with the downstream cell division proteins, which are predominantly periplasmic. The chain is Cell division protein FtsL from Xanthomonas campestris pv. campestris (strain ATCC 33913 / DSM 3586 / NCPPB 528 / LMG 568 / P 25).